The following is a 224-amino-acid chain: Tumor protein D52 (224 aa).

A phosphoserine mark is found at S36 and S40. Residues 62–114 (AATISATETLSEEEQEELRRELAKVEEEIQTLSQVLAAKEKHLAEIKRKLGIN) adopt a coiled-coil conformation. S176 is modified (phosphoserine). The segment at 187–224 (KVGGTKPAGGDFGEVLNSAANASATTTEPLPEKTQESL) is disordered. The segment covering 203–213 (NSAANASATTT) has biased composition (low complexity). S223 bears the Phosphoserine mark.

This sequence belongs to the TPD52 family. Forms a homodimer or heterodimer with other members of the family. All isoforms interact with several 14-3-3 proteins. As to expression, isoform 2 is expressed in colon, breast, prostate, pancreas and kidney tumor cell lines. Isoform 2 is expressed at high levels in kidney, prostate, brain, small intestine and pancreas, at moderate levels in placenta and colon, at low levels in lung, liver and heart, and at very low levels in spleen, thymus, peripheral mononuclear blood cells, testis and ovary.

The sequence is that of Tumor protein D52 (TPD52) from Homo sapiens (Human).